A 636-amino-acid chain; its full sequence is PTS system beta-glucoside-specific EIIBCA component (636 aa).

A PTS EIIB type-1 domain is found at 1 to 86 (MKYEQLAKDI…VEIGGFQNQA (86 aa)). C26 serves as the catalytic Phosphocysteine intermediate; for EIIB activity. 10 helical membrane passes run 104–124 (IDII…TGMI), 146–166 (LLHA…GYTA), 172–192 (ATPF…LVVL), 215–235 (FLGI…IILA), 258–278 (LVPF…IGPI), 299–319 (IIAG…GLHW), 337–357 (VLAM…AVWL), 369–389 (VPAF…GVTL), 407–427 (AIIG…IFGI), and 444–464 (IVIA…LFGL). The PTS EIIC type-1 domain maps to 105–476 (DIIASIFTPV…GNASDEQTET (372 aa)). The tract at residues 472-492 (EQTETKAHTSTGTGEKEEISS) is disordered. The PTS EIIA type-1 domain occupies 506-610 (DEAFSSGALG…AVTTPVIVTN (105 aa)). H558 functions as the Tele-phosphohistidine intermediate; for EIIA activity in the catalytic mechanism.

It is found in the cell membrane. The phosphoenolpyruvate-dependent sugar phosphotransferase system (sugar PTS), a major carbohydrate active -transport system, catalyzes the phosphorylation of incoming sugar substrates concomitantly with their translocation across the cell membrane. This system is involved in beta-glucoside transport. In Halalkalibacterium halodurans (strain ATCC BAA-125 / DSM 18197 / FERM 7344 / JCM 9153 / C-125) (Bacillus halodurans), this protein is PTS system beta-glucoside-specific EIIBCA component (bglP).